The following is a 436-amino-acid chain: Trigger factor (436 aa).

Residues 161–246 enclose the PPIase FKBP-type domain; it reads DDQLNIDFVG…VNSVAEPKLP (86 aa).

Belongs to the FKBP-type PPIase family. Tig subfamily.

The protein resides in the cytoplasm. The catalysed reaction is [protein]-peptidylproline (omega=180) = [protein]-peptidylproline (omega=0). Functionally, involved in protein export. Acts as a chaperone by maintaining the newly synthesized protein in an open conformation. Functions as a peptidyl-prolyl cis-trans isomerase. The protein is Trigger factor of Pseudomonas paraeruginosa (strain DSM 24068 / PA7) (Pseudomonas aeruginosa (strain PA7)).